Reading from the N-terminus, the 285-residue chain is Transmembrane protein 53-A (285 aa).

A helical transmembrane segment spans residues 165–185 (FLALAAFAILVIILRILLYPL).

Belongs to the TMEM53 family.

The protein resides in the nucleus outer membrane. Its function is as follows. Ensures normal bone formation, through the negative regulation of bone morphogenetic protein (BMP) signaling in osteoblast lineage cells by blocking cytoplasm-nucleus translocation of phosphorylated SMAD proteins. The sequence is that of Transmembrane protein 53-A (tmem53-a) from Xenopus laevis (African clawed frog).